Consider the following 287-residue polypeptide: uncharacterized protein (287 aa).

One can recognise an ATP-grasp domain in the interval 115–287 (SLLSKETIKS…KKFLKKKLIS (173 aa)).

This is an uncharacterized protein from Mycoplasma genitalium (strain ATCC 33530 / DSM 19775 / NCTC 10195 / G37) (Mycoplasmoides genitalium).